A 409-amino-acid polypeptide reads, in one-letter code: MAAAQRWLPGILRRGDGLARRLYSSASSLLFDDTQEQFKESVHKFAQETIAPHAAAIDASNHFPKDVNLWKLMGDFNLHGLTAPEEYGGMGLGYMYHCIAMEEISRASGSVGLSYGAHSNLCINQLVRHGSPAQKLKYLPKLISGEHVGALAMSEPNSGSDVVSMKCKAEKVDGGYVINGNKMWCTNGPSAQTLVVYAKTDIAAGSKGITAFIIEKGMPGFSTAQKLDKLGMRGSDTCELVFENCFVPHENVLGEEGKGVYVMMSGLDLERLVLAAGPIGLMQACLDVAVPYVRQREQFGRPIGEFQFIQGKLADMYTSLQSSRSFVYSVARDCDNGKVDRKDCAGVILFAAERATQVALQAIQCLGGNGYINEYPTGRLLRDAKLFEIGAGTSEIRRMIIGRELFKEE.

The N-terminal 22 residues, 1-22 (MAAAQRWLPGILRRGDGLARRL), are a transit peptide targeting the mitochondrion. Residues 151–160 (LAMSEPNSGS) and 184–186 (WCT) contribute to the FAD site. Residue S160 participates in substrate binding. Residues 206–207 (SK), Y261, and 268–271 (DLER) each bind substrate. Catalysis depends on E270, which acts as the Proton acceptor. FAD contacts are provided by residues R296, Q307, and 364–368 (QCLGG). Residue 391–392 (AG) participates in substrate binding. FAD is bound at residue 393–395 (TSE).

The protein belongs to the acyl-CoA dehydrogenase family. As to quaternary structure, homodimer. The cofactor is FAD.

The protein localises to the mitochondrion. The catalysed reaction is 3-methylbutanoyl-CoA + oxidized [electron-transfer flavoprotein] + H(+) = 3-methylbut-2-enoyl-CoA + reduced [electron-transfer flavoprotein]. Its pathway is amino-acid degradation; L-leucine degradation; (S)-3-hydroxy-3-methylglutaryl-CoA from 3-isovaleryl-CoA: step 1/3. The chain is Isovaleryl-CoA dehydrogenase, mitochondrial from Oryza sativa subsp. japonica (Rice).